A 168-amino-acid polypeptide reads, in one-letter code: GPI-anchored protein LLG1 (168 aa).

The first 23 residues, 1 to 23 (MELLSRALFFFLLLSVLSSFSSS), serve as a signal peptide directing secretion. Residue asparagine 57 is glycosylated (N-linked (GlcNAc...) asparagine). Asparagine 144 is lipidated: GPI-anchor amidated asparagine. A propeptide spans 145-168 (AATTSSSRLWLTVSAALLVFVKLF) (removed in mature form).

In terms of assembly, interacts with FER. Expressed in pollen, pollen tubes, sporophytic pistil tissues, in the early stages of female gametophyte development, and in unfertilized, mature ovules. Expressed in roots, lateral roots, shoots, cotyledons, petioles, developing leaves and anther filaments.

It localises to the cell membrane. Its function is as follows. Component of the FER-regulated Rho GTPase signaling complex. Acts as a chaperone and coreceptor for FER. Required for localization of FER to the plasma membrane. This Arabidopsis thaliana (Mouse-ear cress) protein is GPI-anchored protein LLG1.